The primary structure comprises 479 residues: Probable aspartic-type endopeptidase OPSB (479 aa).

The N-terminal stretch at 1–19 is a signal peptide; it reads MRGDSFIWSLTTAASLLYA. Residues 58 to 393 enclose the Peptidase A1 domain; it reads SGKTVSQDLD…DLDNNEISIA (336 aa). An N-linked (GlcNAc...) asparagine glycan is attached at N68. D76 is a catalytic residue. The N-linked (GlcNAc...) asparagine glycan is linked to N121. Residue D275 is part of the active site. An N-linked (GlcNAc...) asparagine glycan is attached at N398. The disordered stretch occupies residues 435–454; it reads LSGIETGVPGARPTSRGAAP. G451 is lipidated: GPI-anchor amidated glycine. A propeptide spans 452–479 (removed in mature form); the sequence is AAPTMRPDVTFGVAAAGLAGAGILFAFM.

This sequence belongs to the peptidase A1 family.

It is found in the cell membrane. Functionally, probable GPI-anchored aspartic-type endopeptidase which contributes to virulence. This Arthroderma otae (strain ATCC MYA-4605 / CBS 113480) (Microsporum canis) protein is Probable aspartic-type endopeptidase OPSB (OPSB).